The sequence spans 1165 residues: Serine/threonine-protein kinase/endoribonuclease ireA (1165 aa).

The first 27 residues, 1–27 (MRWRLPGARTTLPASVALLLLPILVAP), serve as a signal peptide directing secretion. Residues 28 to 504 (QQLQEHDDLP…STIIRKGWDN (477 aa)) lie on the Lumenal side of the membrane. N-linked (GlcNAc...) asparagine glycosylation is present at Asn-152. The chain crosses the membrane as a helical span at residues 505–525 (AVDIFVTILLLFFGAFIYFNS). At 526 to 1165 (HNIQELAKQK…RFKRYFTPVE (640 aa)) the chain is on the cytoplasmic side. The disordered stretch occupies residues 547-668 (QPPLSTPSTP…SEGESKDQAD (122 aa)). Composition is skewed to basic and acidic residues over residues 591–600 (ATPKPKRDRS) and 611–620 (KIREPSRGPD). Over residues 637–655 (PKKKARRGRRGGKNHRRGK) the composition is skewed to basic residues. The span at 656-668 (KPDSEGESKDQAD) shows a compositional bias: basic and acidic residues. One can recognise a Protein kinase domain in the interval 711-1026 (VFSDVVLGHG…ASAVLMHPFF (316 aa)). Residues 717–725 (LGHGSHGTV) and Lys-739 each bind ATP. Asp-832 (proton acceptor) is an active-site residue. Residues 899-919 (AIQGGESQHTESSEPAVVDPQ) form a disordered region. A KEN domain is found at 1029–1163 (PSDRLSFLCD…IDRFKRYFTP (135 aa)).

It belongs to the protein kinase superfamily. Ser/Thr protein kinase family. Homodimer; in response to the accumulation of unfolded proteins. Requires Mg(2+) as cofactor. Autophosphorylated mainly on serine residues.

The protein localises to the membrane. The catalysed reaction is L-seryl-[protein] + ATP = O-phospho-L-seryl-[protein] + ADP + H(+). It catalyses the reaction L-threonyl-[protein] + ATP = O-phospho-L-threonyl-[protein] + ADP + H(+). 8-formyl-7-hydroxy-4-methylcoumarin inhibits the endonuclease activity and prebvent the splicing if the hacA mRNA. The kinase domain is activated by trans-autophosphorylation. Kinase activity is required for activation of the endoribonuclease domain. Senses unfolded proteins in the lumen of the endoplasmic reticulum (ER) via its N-terminal domain which leads to enzyme auto-activation. The active endoribonuclease domain responds by cleaving an intron from the downstream cytoplasmic mRNA hacA, allowing for the translation of a transcription factor that coordinates a series of adaptive responses that are collectively known as the unfolded protein response (UPR). In the absence of ER stress, ireA controls dual signaling circuits that are both hacA-dependent and hacA-independent and which contribute to the expression of traits that are essential for virulence. The chain is Serine/threonine-protein kinase/endoribonuclease ireA from Aspergillus fumigatus (strain ATCC MYA-4609 / CBS 101355 / FGSC A1100 / Af293) (Neosartorya fumigata).